The sequence spans 338 residues: Protein UL141 (338 aa).

The signal sequence occupies residues 1–25 (MCRRESLRTLPWLFWVLLSCPRLLE). Residues 37 to 278 (DIAEKMWAEN…DTGMSPWATR (242 aa)) lie on the Extracellular side of the membrane. N117, N132, and N147 each carry an N-linked (GlcNAc...) asparagine; by host glycan. Residues 279–299 (GIAAFLGFWSIFTVCFLCYLC) form a helical membrane-spanning segment. Topologically, residues 300–338 (YLQCCGHWCPTPGRGRRGGEGYRRLPTYDSYPGVKKMKR) are cytoplasmic.

Interacts with human PVR. Interacts with human TNFRSF10A and TNFRSF10B. Forms a homodimer that engages two TNFRSF10B monomers.

It is found in the host endoplasmic reticulum membrane. Evasion of NK cell killing. Blocks surface expression of PVR which is a ligand for NK cell-activating receptors. Binds human PVR in the endoplasmic reticulum and prevents its maturation and transport to the cell surface. Targets also the natural killer cell activating ligand NECTIN2 for proteasome-mediated degradation. Additionally promotes intracellular retention of TNFRSF10A/TRAIL-R1 and TNFRSF10B/TRAIL-R2 and thus down-regulates their cell surface expression. This Human cytomegalovirus (strain Merlin) (HHV-5) protein is Protein UL141 (UL141).